Here is a 363-residue protein sequence, read N- to C-terminus: Uptake hydrogenase small subunit (363 aa).

The segment at residues 1–46 (MGAATETFYSVIRRQGITRRSFHKFCSLTATSLGLGPLAASRIANA) is a signal peptide (tat-type signal). 8 residues coordinate [4Fe-4S] cluster: cysteine 63, cysteine 66, cysteine 161, cysteine 195, histidine 233, cysteine 236, cysteine 261, and cysteine 267. Residues cysteine 276, cysteine 295, and cysteine 298 each coordinate [3Fe-4S] cluster.

The protein belongs to the [NiFe]/[NiFeSe] hydrogenase small subunit family. As to quaternary structure, heterodimer of a large and a small subunit. Requires [4Fe-4S] cluster as cofactor. The cofactor is [3Fe-4S] cluster. Post-translationally, predicted to be exported by the Tat system. The position of the signal peptide cleavage has not been experimentally proven.

The protein resides in the cell membrane. It catalyses the reaction H2 + A = AH2. Its function is as follows. This enzyme recycles the H(2) produced by nitrogenase to increase the production of ATP and to protect nitrogenase against inhibition or damage by O(2) under carbon- or phosphate-limited conditions. The sequence is that of Uptake hydrogenase small subunit (hupA) from Bradyrhizobium diazoefficiens (strain JCM 10833 / BCRC 13528 / IAM 13628 / NBRC 14792 / USDA 110).